Consider the following 367-residue polypeptide: Molybdopterin synthase catalytic subunit (367 aa).

Residues 101–102 (HR), K117, and 124–126 (KKE) each bind substrate. The disordered stretch occupies residues 325–350 (RHFTKREPSSMEAAPPKKSRKKSYSA).

Belongs to the MoaE family. MOCS2B subfamily. As to quaternary structure, heterotetramer; composed of 2 small (Mocs2A) and 2 large (Mocs2B) subunits. Component of the Ada2a-containing (ATAC) complex composed of at least Ada2a, Atac1, Hcf, Ada3, Gcn5, Mocs2B, Charac-14, Atac3, Atac2, NC2beta and wds.

It is found in the cytoplasm. It localises to the nucleus. The enzyme catalyses 2 [molybdopterin-synthase sulfur-carrier protein]-C-terminal-Gly-aminoethanethioate + cyclic pyranopterin phosphate + H2O = molybdopterin + 2 [molybdopterin-synthase sulfur-carrier protein]-C-terminal Gly-Gly + 2 H(+). It functions in the pathway cofactor biosynthesis; molybdopterin biosynthesis. Its function is as follows. Catalytic subunit of the molybdopterin synthase complex, a complex that catalyzes the conversion of precursor Z into molybdopterin. Acts by mediating the incorporation of 2 sulfur atoms from thiocarboxylated Mocs2A into precursor Z to generate a dithiolene group. Involved during biosynthesis of the molybdenum cofactor. The chain is Molybdopterin synthase catalytic subunit from Drosophila melanogaster (Fruit fly).